Consider the following 213-residue polypeptide: uncharacterized protein (213 aa).

Over residues 1-11 the composition is skewed to basic and acidic residues; it reads MFATKDPEFEN. Disordered regions lie at residues 1-21 and 63-98; these read MFAT…SPRN and LRNK…EQAW. A compositionally biased stretch (polar residues) spans 12–21; it reads RINTNKSPRN. Positions 63–93 are enriched in basic and acidic residues; that stretch reads LRNKAPKNEETKHEEHTPDNHEETDHHEAKQ.

This is an uncharacterized protein from Escherichia coli (strain K12).